The chain runs to 808 residues: Bifunctional uridylyltransferase/uridylyl-removing enzyme (808 aa).

Positions 1-315 (MEAESPCAAS…ALVRRPKRRP (315 aa)) are uridylyltransferase. The tract at residues 316–609 (LDEGVVEYAG…EISPRDGERI (294 aa)) is uridylyl-removing. The region spanning 430 to 544 (VDRHVVETAV…LEVLHALSEA (115 aa)) is the HD domain. ACT domains lie at 610-686 (DAVI…GMLQ) and 730-805 (ILEV…VDEP).

It belongs to the GlnD family. Mg(2+) is required as a cofactor.

The enzyme catalyses [protein-PII]-L-tyrosine + UTP = [protein-PII]-uridylyl-L-tyrosine + diphosphate. It carries out the reaction [protein-PII]-uridylyl-L-tyrosine + H2O = [protein-PII]-L-tyrosine + UMP + H(+). Functionally, modifies, by uridylylation and deuridylylation, the PII regulatory protein (GlnB), in response to the nitrogen status of the cell that GlnD senses through the glutamine level. Under low glutamine levels, catalyzes the conversion of the PII protein and UTP to PII-UMP and PPi, while under higher glutamine levels, GlnD hydrolyzes PII-UMP to PII and UMP (deuridylylation). Thus, controls uridylylation state and activity of the PII protein, and plays an important role in the regulation of nitrogen assimilation and metabolism. This chain is Bifunctional uridylyltransferase/uridylyl-removing enzyme, found in Mycobacterium tuberculosis (strain CDC 1551 / Oshkosh).